The sequence spans 127 residues: NADPH-dependent 7-cyano-7-deazaguanine reductase (127 aa).

Residue cysteine 40 is the Thioimide intermediate of the active site. Catalysis depends on aspartate 47, which acts as the Proton donor. Residues 62–64 and 81–82 contribute to the substrate site; these read VEL and HE.

This sequence belongs to the GTP cyclohydrolase I family. QueF type 1 subfamily.

It localises to the cytoplasm. The enzyme catalyses 7-aminomethyl-7-carbaguanine + 2 NADP(+) = 7-cyano-7-deazaguanine + 2 NADPH + 3 H(+). Its pathway is tRNA modification; tRNA-queuosine biosynthesis. Catalyzes the NADPH-dependent reduction of 7-cyano-7-deazaguanine (preQ0) to 7-aminomethyl-7-deazaguanine (preQ1). The chain is NADPH-dependent 7-cyano-7-deazaguanine reductase from Campylobacter jejuni subsp. jejuni serotype O:2 (strain ATCC 700819 / NCTC 11168).